The primary structure comprises 284 residues: Tropomyosin Tod p 1.0102 (284 aa).

Residues 15–273 (KEVATDKAEQ…KERYKSISDE (259 aa)) adopt a coiled-coil conformation. A disordered region spans residues 103–136 (EERLTSAQSKLEDASKAADESERGRKVLENRSQG).

This sequence belongs to the tropomyosin family. Homodimer. Post-translationally, the N-terminus is blocked. Expressed in mantle muscle (at protein level).

Functionally, tropomyosin, in association with the troponin complex, plays a central role in the calcium dependent regulation of muscle contraction. This chain is Tropomyosin Tod p 1.0102, found in Todarodes pacificus (Japanese flying squid).